A 408-amino-acid polypeptide reads, in one-letter code: Intracellular coagulation inhibitor 2 (408 aa).

Residues 1–22 form the signal peptide; sequence MLSRRTLDCCLVMLIVSTTFCQ. A disulfide bond links Cys50 and Cys249. N-linked (GlcNAc...) asparagine glycosylation occurs at Asn174.

It belongs to the serpin family. In terms of assembly, monomer. Forms a covalent heterodimer with clotting factor C chain B. Forms a covalent heterodimer with proclotting enzyme heavy chain. In terms of tissue distribution, specifically expressed in hemocytes (at protein level).

The protein resides in the secreted. Its function is as follows. Serine protease inhibitor that inhibits proclotting enzyme and to a lesser extent clotting factor C and clotting factor G. In Tachypleus tridentatus (Japanese horseshoe crab), this protein is Intracellular coagulation inhibitor 2.